The primary structure comprises 333 residues: Na(+)/H(+) exchange regulatory cofactor NHE-RF1 (333 aa).

Positions 13 to 93 constitute a PDZ 1 domain; that stretch reads LCCMEKGPDG…AVRLLVVQPQ (81 aa). Disordered regions lie at residues 90 to 164 and 232 to 333; these read VQPQ…RAVD and LAGP…FSNL. Residues 97–111 are compositionally biased toward basic and acidic residues; that stretch reads QPPKTHSDPDGEAQR. The span at 112–122 shows a compositional bias: low complexity; it reads EPPAAETPAAE. A compositionally biased stretch (basic and acidic residues) spans 124 to 133; it reads SGPEERELRP. The PDZ 2 domain maps to 135–215; it reads LCRIKKGPNG…ETKLLVVGVL (81 aa). Basic and acidic residues-rich tracts occupy residues 274–289 and 323–333; these read SETHSEPDTQEGDKRS and WSKKNELFSNL.

The protein resides in the endomembrane system. It is found in the cell projection. Its subcellular location is the filopodium. It localises to the ruffle. The protein localises to the microvillus. Its function is as follows. Scaffold protein that connects plasma membrane proteins with members of the ezrin/moesin/radixin family and thereby helps to link them to the actin cytoskeleton and to regulate their surface expression. Was first known to play a role in the regulation of the activity and subcellular location of SLC9A3. May enhance Wnt signaling. The sequence is that of Na(+)/H(+) exchange regulatory cofactor NHE-RF1 (NHERF1) from Gallus gallus (Chicken).